Consider the following 100-residue polypeptide: Urease subunit gamma (100 aa).

The protein belongs to the urease gamma subunit family. Heterotrimer of UreA (gamma), UreB (beta) and UreC (alpha) subunits. Three heterotrimers associate to form the active enzyme.

The protein resides in the cytoplasm. The catalysed reaction is urea + 2 H2O + H(+) = hydrogencarbonate + 2 NH4(+). The protein operates within nitrogen metabolism; urea degradation; CO(2) and NH(3) from urea (urease route): step 1/1. In Pseudomonas fluorescens (strain Pf0-1), this protein is Urease subunit gamma.